Consider the following 142-residue polypeptide: Large ribosomal subunit protein uL11 (142 aa).

Belongs to the universal ribosomal protein uL11 family. Part of the ribosomal stalk of the 50S ribosomal subunit. Interacts with L10 and the large rRNA to form the base of the stalk. L10 forms an elongated spine to which L12 dimers bind in a sequential fashion forming a multimeric L10(L12)X complex. In terms of processing, one or more lysine residues are methylated.

In terms of biological role, forms part of the ribosomal stalk which helps the ribosome interact with GTP-bound translation factors. The protein is Large ribosomal subunit protein uL11 of Shewanella oneidensis (strain ATCC 700550 / JCM 31522 / CIP 106686 / LMG 19005 / NCIMB 14063 / MR-1).